The sequence spans 90 residues: Probable Fe(2+)-trafficking protein (90 aa).

This sequence belongs to the Fe(2+)-trafficking protein family.

Could be a mediator in iron transactions between iron acquisition and iron-requiring processes, such as synthesis and/or repair of Fe-S clusters in biosynthetic enzymes. The protein is Probable Fe(2+)-trafficking protein of Vibrio parahaemolyticus serotype O3:K6 (strain RIMD 2210633).